Reading from the N-terminus, the 374-residue chain is tRNA-specific 2-thiouridylase MnmA (374 aa).

ATP-binding positions include G12–S19 and M38. The tract at residues N98 to D100 is interaction with target base in tRNA. The active-site Nucleophile is C103. C103 and C202 form a disulfide bridge. G128 contributes to the ATP binding site. The tract at residues K152–Q154 is interaction with tRNA. C202 acts as the Cysteine persulfide intermediate in catalysis. Residues R316–Y317 form an interaction with tRNA region.

This sequence belongs to the MnmA/TRMU family.

Its subcellular location is the cytoplasm. It carries out the reaction S-sulfanyl-L-cysteinyl-[protein] + uridine(34) in tRNA + AH2 + ATP = 2-thiouridine(34) in tRNA + L-cysteinyl-[protein] + A + AMP + diphosphate + H(+). Functionally, catalyzes the 2-thiolation of uridine at the wobble position (U34) of tRNA, leading to the formation of s(2)U34. The polypeptide is tRNA-specific 2-thiouridylase MnmA (Vibrio campbellii (strain ATCC BAA-1116)).